The primary structure comprises 158 residues: Cyclic pyranopterin monophosphate synthase (158 aa).

Substrate contacts are provided by residues 76–78 and 114–115; these read MCH and ME. Asp129 is an active-site residue.

This sequence belongs to the MoaC family. In terms of assembly, homohexamer; trimer of dimers.

The catalysed reaction is (8S)-3',8-cyclo-7,8-dihydroguanosine 5'-triphosphate = cyclic pyranopterin phosphate + diphosphate. Its pathway is cofactor biosynthesis; molybdopterin biosynthesis. Its function is as follows. Catalyzes the conversion of (8S)-3',8-cyclo-7,8-dihydroguanosine 5'-triphosphate to cyclic pyranopterin monophosphate (cPMP). The chain is Cyclic pyranopterin monophosphate synthase from Clostridium perfringens (strain 13 / Type A).